Here is a 318-residue protein sequence, read N- to C-terminus: Putative HTH-type transcriptional regulatory protein TK0539 (318 aa).

Positions 131–189 (LRELREKHGYSVNELAQLLGVSRKSLLNYERGEQAVSLDVAIQLEEIFDEALAEPIDIL) constitute an HTH cro/C1-type domain. The segment at residues 142–161 (VNELAQLLGVSRKSLLNYER) is a DNA-binding region (H-T-H motif).

The chain is Putative HTH-type transcriptional regulatory protein TK0539 from Thermococcus kodakarensis (strain ATCC BAA-918 / JCM 12380 / KOD1) (Pyrococcus kodakaraensis (strain KOD1)).